Reading from the N-terminus, the 472-residue chain is Alanine--anticapsin ligase (472 aa).

Residue Glu109 coordinates Mg(2+). Lys138 and Lys178 together coordinate ATP. Positions 142–355 constitute an ATP-grasp domain; the sequence is RAAFNRAGVK…MAQLLLDVLC (214 aa). Leu182 provides a ligand contact to Mg(2+). ATP-binding positions include 184 to 185, 226 to 229, and Gln268; these read SS and EEFL. Residues Glu273 and 309–311 contribute to the substrate site; that span reads HTE. Residues Glu311 and Glu324 each contribute to the Mg(2+) site. Residue 328–331 coordinates substrate; it reads RFAG.

In terms of assembly, monomer or homodimer. Requires Mg(2+) as cofactor.

The catalysed reaction is L-anticapsin + L-alanine + ATP = bacilysin + ADP + phosphate + H(+). Its pathway is antibiotic biosynthesis; bacilysin biosynthesis. Its function is as follows. Part of the bacABCDEFG operon responsible for the biosynthesis of bacilysin, an irreversible inactivator of the glutaminase domain of glucosamine synthetase. Catalyzes the formation of alpha-dipeptides from various L-amino acids in the presence of ATP. In vivo catalyzes the ligation of L-alanine and L-anticapsin (epoxycyclohexanonyl-Ala) to produce the final bacilysin antibiotic (L-Ala-L-4S-cyclohexenonyl-Ala dipeptide). The sequence is that of Alanine--anticapsin ligase from Bacillus amyloliquefaciens (Bacillus velezensis).